A 184-amino-acid chain; its full sequence is Probable RNA 2'-phosphotransferase (184 aa).

The protein belongs to the KptA/TPT1 family.

In terms of biological role, removes the 2'-phosphate from RNA via an intermediate in which the phosphate is ADP-ribosylated by NAD followed by a presumed transesterification to release the RNA and generate ADP-ribose 1''-2''-cyclic phosphate (APPR&gt;P). May function as an ADP-ribosylase. This chain is Probable RNA 2'-phosphotransferase, found in Escherichia coli O139:H28 (strain E24377A / ETEC).